The chain runs to 217 residues: Probable glutathione S-transferase DHAR4 (217 aa).

Glutathione-binding residues include lysine 8 and aspartate 19. L-ascorbate is bound by residues lysine 8 and aspartate 19. A GST N-terminal domain is found at alanine 10–lysine 85. Residue cysteine 20 is the Nucleophile of the active site. The Glutathione-binding motif lies at cysteine 20 to arginine 25. Lysine 47, serine 75, histidine 164, and tryptophan 211 together coordinate glutathione. The 132-residue stretch at tyrosine 86–valine 217 folds into the GST C-terminal domain. Lysine 214 contributes to the L-ascorbate binding site.

The protein belongs to the GST superfamily. DHAR family. Monomer.

It localises to the cytoplasm. The protein localises to the cytosol. The enzyme catalyses RX + glutathione = an S-substituted glutathione + a halide anion + H(+). It catalyses the reaction L-dehydroascorbate + 2 glutathione = glutathione disulfide + L-ascorbate. Exhibits glutathione-dependent thiol transferase and dehydroascorbate (DHA) reductase activities. In Arabidopsis thaliana (Mouse-ear cress), this protein is Probable glutathione S-transferase DHAR4 (DHAR4).